The following is a 257-amino-acid chain: UPF0246 protein lpg1366 (257 aa).

It belongs to the UPF0246 family.

The protein is UPF0246 protein lpg1366 of Legionella pneumophila subsp. pneumophila (strain Philadelphia 1 / ATCC 33152 / DSM 7513).